The following is a 277-amino-acid chain: Large ribosomal subunit protein uL2 (277 aa).

2 disordered regions span residues 32–58 (KSLT…RGGG) and 225–277 (VAMN…RRNK). Residues 258–277 (YKTRKKKRYSDKFIIKRRNK) are compositionally biased toward basic residues.

This sequence belongs to the universal ribosomal protein uL2 family. Part of the 50S ribosomal subunit. Forms a bridge to the 30S subunit in the 70S ribosome.

One of the primary rRNA binding proteins. Required for association of the 30S and 50S subunits to form the 70S ribosome, for tRNA binding and peptide bond formation. It has been suggested to have peptidyltransferase activity; this is somewhat controversial. Makes several contacts with the 16S rRNA in the 70S ribosome. The chain is Large ribosomal subunit protein uL2 from Borreliella afzelii (strain PKo) (Borrelia afzelii).